The sequence spans 230 residues: Flagellar L-ring protein (230 aa).

Positions Met1–Gly18 are cleaved as a signal peptide. A lipid anchor (N-palmitoyl cysteine) is attached at Cys19. Cys19 carries the S-diacylglycerol cysteine lipid modification.

It belongs to the FlgH family. As to quaternary structure, the basal body constitutes a major portion of the flagellar organelle and consists of four rings (L,P,S, and M) mounted on a central rod.

Its subcellular location is the cell outer membrane. It localises to the bacterial flagellum basal body. In terms of biological role, assembles around the rod to form the L-ring and probably protects the motor/basal body from shearing forces during rotation. In Legionella pneumophila (strain Paris), this protein is Flagellar L-ring protein.